The following is a 270-amino-acid chain: Putative phosphatase YxeH (270 aa).

Residue Asp8 is the Nucleophile of the active site. Residue Asp8 participates in Mg(2+) binding. Residue Met9 coordinates phosphate. Residue Asp10 coordinates Mg(2+). Residues 42-43 (TG) and Lys196 contribute to the phosphate site. Asp219 contributes to the Mg(2+) binding site. Residue Asn222 participates in phosphate binding.

It belongs to the HAD-like hydrolase superfamily. Cof family. Requires Mg(2+) as cofactor.

This chain is Putative phosphatase YxeH (yxeH), found in Bacillus subtilis (strain 168).